A 365-amino-acid polypeptide reads, in one-letter code: Autoinducer 2-binding periplasmic protein LuxP (365 aa).

The first 23 residues, 1 to 23 (MKKALLFSLISMVGFSPASQATQ), serve as a signal peptide directing secretion.

This sequence belongs to the bacterial solute-binding protein 2 family.

It localises to the periplasm. Binds to the signaling molecule autoinducer 2 (AI-2), a furanosyl borate diester, (3a-methyl-5,6-dihydrofuro-[2,3d][1,3,2]dioxaborole-2,2,6,6a-tetraol). This complex then interacts with the LuxQ sensor protein. The polypeptide is Autoinducer 2-binding periplasmic protein LuxP (luxP) (Vibrio harveyi (Beneckea harveyi)).